We begin with the raw amino-acid sequence, 627 residues long: MFPLYLVRLLYPIGLIANLFFGFAFTLQWFLSERHKRACVPKAFWIFSSIGAILMIAHGFIQSQFPIALLHGANLVIYFRNLNISSSRKLSLKTTLIILAVTLLLTALPFALEAYYHPNMQWMASPNIFHLPLPPPNMYWHMIGCLGLFTFSCRFFIQWCHLEMNNQSTLPVLFWQVGFVGGFLAFLYFIRTGDPVNILSYGCGLFPSIANLRIIYKKSRLSEFHNPSYFISAGEASGDTLGSDLLRHIKALHPDKRCFGVGGPLMRQEGLEPLIHMEEFQVSGFLEILTSIFTLIKKYRKLYKAILKENPEIVFCIDFPDFHFFLIKKLRKCGYTGKIVHYVCPSIWAWRPKRKKILEKYLDTLLLILPFENELFINSPLKTIYLGHPLVKTISNFQHCPSWKQALAISDQPIVALFPGSRPGDILRNLQVHIRAFLASSLAESHQLLVSSYNLKHDQTILDLLEKEGCCGKTVPAMYRYHLMRDCDCALAKCGTIALEAALNQTPTIVTCLLRPFDIFLAKYIFKIFMSAYSLPNIITKSIIFPEFIGGKSDFTPEEVAAAIDILANPKSREKQKRACQTLLETMETNVVTVQECLQTIHSLKSRFHTENDCLGNYVQKNVRPSF.

The unknown stretch occupies residues 1 to 224 (MFPLYLVRLL…IYKKSRLSEF (224 aa)). Residues 225–627 (HNPSYFISAG…YVQKNVRPSF (403 aa)) form a lipid-A-disaccharide synthase region.

In the C-terminal section; belongs to the LpxB family.

The catalysed reaction is a lipid X + a UDP-2-N,3-O-bis[(3R)-3-hydroxyacyl]-alpha-D-glucosamine = a lipid A disaccharide + UDP + H(+). It participates in bacterial outer membrane biogenesis; LPS lipid A biosynthesis. Its function is as follows. Condensation of UDP-2,3-diacylglucosamine and 2,3-diacylglucosamine-1-phosphate to form lipid A disaccharide, a precursor of lipid A, a phosphorylated glycolipid that anchors the lipopolysaccharide to the outer membrane of the cell. The polypeptide is Lipid-A-disaccharide synthase (lpxB) (Chlamydia abortus (strain DSM 27085 / S26/3) (Chlamydophila abortus)).